Here is a 299-residue protein sequence, read N- to C-terminus: Taste receptor type 2 member 50 (299 aa).

Met-1 is a topological domain (extracellular). A helical transmembrane segment spans residues 2-22; that stretch reads ITFLYIFFSILILVLFVLGNF. Residues 23–55 lie on the Cytoplasmic side of the membrane; that stretch reads ANGFIALVNFIDWVKRKKISSADQILTALAVSR. Residues 56–76 form a helical membrane-spanning segment; sequence IGLLWALLLNWYLTVLNPAFY. Over 77–87 the chain is Extracellular; the sequence is SVELRITSYNA. The chain crosses the membrane as a helical span at residues 88 to 108; the sequence is WVVTNHFSMWLAASLSIFYLL. The Cytoplasmic portion of the chain corresponds to 109–126; it reads KIANFSNLIFLHLKRRVR. A helical transmembrane segment spans residues 127-147; sequence SVILVILLGTLIFLVCHLLVA. Residues 148 to 181 are Extracellular-facing; it reads NMDESMWAEEYEGNMTGKMKLRNTVHLSYLTVTT. Asn-161 carries an N-linked (GlcNAc...) asparagine glycan. The chain crosses the membrane as a helical span at residues 182-202; the sequence is LWSFIPFTLSLISFLMLICSL. Topologically, residues 203 to 229 are cytoplasmic; that stretch reads CKHLKKMQLHGEGSQDLSTKVHIKALQ. The helical transmembrane segment at 230–250 threads the bilayer; the sequence is TLISFLLLCAIFFLFLIISVW. Residues 251-259 lie on the Extracellular side of the membrane; that stretch reads SPRRLQNDP. The helical transmembrane segment at 260–280 threads the bilayer; that stretch reads VVMVSKAVGNIYLAFDSFILI. At 281–299 the chain is on the cytoplasmic side; the sequence is WRTKKLKHTFLLILCQIRC.

The protein belongs to the G-protein coupled receptor T2R family.

The protein resides in the membrane. Receptor that may play a role in the perception of bitterness and is gustducin-linked. May play a role in sensing the chemical composition of the gastrointestinal content. The activity of this receptor may stimulate alpha gustducin, mediate PLC-beta-2 activation and lead to the gating of TRPM5. The protein is Taste receptor type 2 member 50 (TAS2R50) of Gorilla gorilla gorilla (Western lowland gorilla).